The primary structure comprises 565 residues: Bicyclogermacrene synthase (565 aa).

Mg(2+) contacts are provided by Asp-317, Asp-321, Asp-461, and Glu-469. The short motif at 317–321 is the DDXXD motif element; that stretch reads DDTFD.

It belongs to the terpene synthase family. Mg(2+) serves as cofactor.

The enzyme catalyses (2E,6E)-farnesyl diphosphate = bicyclogermacrene + diphosphate. The protein operates within secondary metabolite biosynthesis; terpenoid biosynthesis. Sesquiterpene synthase converting farnesyl diphosphate to bicyclogermacrene as the major product. This Phyla dulcis (Aztec sweet herb) protein is Bicyclogermacrene synthase.